Here is a 225-residue protein sequence, read N- to C-terminus: Small ribosomal subunit protein uS3 (225 aa).

In terms of domain architecture, KH type-2 spans 16–85; sequence VCEYVVKETE…TPQIEVKDVK (70 aa). Residues 202-225 are disordered; it reads EVGTESKADQTDVEGRETGNAEES. The span at 205–225 shows a compositional bias: basic and acidic residues; that stretch reads TESKADQTDVEGRETGNAEES.

Belongs to the universal ribosomal protein uS3 family. As to quaternary structure, part of the 30S ribosomal subunit.

In terms of biological role, binds the lower part of the 30S subunit head. The sequence is that of Small ribosomal subunit protein uS3 from Thermoplasma acidophilum (strain ATCC 25905 / DSM 1728 / JCM 9062 / NBRC 15155 / AMRC-C165).